Here is a 126-residue protein sequence, read N- to C-terminus: MSLLRHRLQALPSLCLCVLVLACIGACQSEAYEGTTSPPPEQKMSRWNLVQSRLKELLEPAVTRTRDRWQWLGWSLSTLQGFMQTYYDDHLRDLGPRTKTWLLESKDGLLNKTYSLCPRLLCADKN.

The first 27 residues, 1–27 (MSLLRHRLQALPSLCLCVLVLACIGAC), serve as a signal peptide directing secretion.

The protein belongs to the apolipoprotein C4 family.

Its subcellular location is the secreted. Its function is as follows. May participate in lipoprotein metabolism. In Aotus nancymaae (Ma's night monkey), this protein is Apolipoprotein C-IV (APOC4).